A 532-amino-acid chain; its full sequence is Probable galacturonosyltransferase 14 (532 aa).

The Cytoplasmic segment spans residues 1–40 (MQLHISPSMRSITISSSNEFIDLMKIKVAARHISYRTLFH). The helical; Signal-anchor for type II membrane protein transmembrane segment at 41–61 (TILILAFLLPFVFILTAVVTL) threads the bilayer. At 62–532 (EGVNKCSSID…DFIKNCHILE (471 aa)) the chain is on the lumenal side. N-linked (GlcNAc...) asparagine glycosylation is found at Asn-305, Asn-395, Asn-444, and Asn-519.

It belongs to the glycosyltransferase 8 family. In terms of tissue distribution, expressed in roots, inflorescences, siliques, leaves and stems. Accumulates in pollen grains.

It localises to the golgi apparatus membrane. Its pathway is glycan metabolism; pectin biosynthesis. Functionally, may be involved in pectin and/or xylans biosynthesis in cell walls. Together with GAUT13, required for pollen tube growth, possibly through the regulation of pectin biosynthesis and repartition in the pollen tube wall. This is Probable galacturonosyltransferase 14 from Arabidopsis thaliana (Mouse-ear cress).